Consider the following 575-residue polypeptide: Putative diflavin flavoprotein A 4 (575 aa).

Positions 41-234 (QRGTTANSYL…LGARSYAPGH (194 aa)) are zinc metallo-hydrolase. Residues 263-405 (VALLYTSAYG…AGATFAQTLK (143 aa)) enclose the Flavodoxin-like domain. A flavodoxin-reductase-like region spans residues 429–575 (VGRIIGSLCV…AVEHRKSGSH (147 aa)).

The protein in the N-terminal section; belongs to the zinc metallo-hydrolase group 3 family. It in the C-terminal section; belongs to the flavodoxin reductase family. Fe cation is required as a cofactor.

Its function is as follows. Mediates electron transfer from NADH to oxygen, reducing it to water. This modular protein has 3 redox cofactors, in other organisms the same activity requires 2 or 3 proteins. This Nostoc sp. (strain PCC 7120 / SAG 25.82 / UTEX 2576) protein is Putative diflavin flavoprotein A 4 (dfa4).